A 434-amino-acid polypeptide reads, in one-letter code: Ribosomal protein uS12 methylthiotransferase RimO (434 aa).

An MTTase N-terminal domain is found at 1–107; that stretch reads MHLGCEKNLV…ILNVLQRIEQ (107 aa). Positions 5, 41, 70, 145, 149, and 152 each coordinate [4Fe-4S] cluster. The region spanning 131 to 360 is the Radical SAM core domain; the sequence is TTGKAVAYLK…ISIQQPIAEL (230 aa). A TRAM domain is found at 363 to 434; it reads QNWIGRTVDV…DLYDLTGQVV (72 aa).

This sequence belongs to the methylthiotransferase family. RimO subfamily. Requires [4Fe-4S] cluster as cofactor.

It is found in the cytoplasm. The catalysed reaction is L-aspartate(89)-[ribosomal protein uS12]-hydrogen + (sulfur carrier)-SH + AH2 + 2 S-adenosyl-L-methionine = 3-methylsulfanyl-L-aspartate(89)-[ribosomal protein uS12]-hydrogen + (sulfur carrier)-H + 5'-deoxyadenosine + L-methionine + A + S-adenosyl-L-homocysteine + 2 H(+). Its function is as follows. Catalyzes the methylthiolation of an aspartic acid residue of ribosomal protein uS12. This is Ribosomal protein uS12 methylthiotransferase RimO from Prochlorococcus marinus (strain SARG / CCMP1375 / SS120).